The following is a 562-amino-acid chain: Nucleoprotein (562 aa).

Residues 53–238 form a binding site for the cap structure m7GTP region; sequence MRRERRDDND…ITQEESQINI (186 aa). The Mn(2+) site is built by Asp381 and Glu383. The Zn(2+) site is built by Glu391, Cys498, His501, and Cys522. A Mn(2+)-binding site is contributed by Asp526.

This sequence belongs to the arenaviridae nucleocapsid protein family. As to quaternary structure, homomultimerizes to form the nucleocapsid. Binds to viral genomic RNA. Interacts with glycoprotein G2. Interacts with protein Z; this interaction probably directs the encapsidated genome to budding sites. Interacts with protein L; this interaction does not interfere with Z-L interaction. Interacts with host IKBKE (via Protein kinase domain); the interaction inhibits IKBKE kinase activity.

The protein localises to the virion. It is found in the host cytoplasm. Functionally, encapsidates the genome, protecting it from nucleases. The encapsidated genomic RNA is termed the nucleocapsid (NC). Serves as template for viral transcription and replication. The increased presence of protein N in host cell does not seem to trigger the switch from transcription to replication as observed in other negative strain RNA viruses. Through the interaction with host IKBKE, strongly inhibits the phosphorylation and nuclear translocation of host IRF3, a protein involved in interferon activation pathway, leading to the inhibition of interferon-beta and IRF3-dependent promoters activation. Also encodes a functional 3'-5' exoribonuclease that degrades preferentially dsRNA substrates and thereby participates in the suppression of interferon induction. The polypeptide is Nucleoprotein (Tamiami mammarenavirus (isolate Rat/United States/W 10777/1964) (TAMV)).